Consider the following 311-residue polypeptide: Homeobox protein knotted-1-like 10 (311 aa).

2 disordered regions span residues 1 to 45 and 153 to 184; these read MEDL…PATT and LCGG…DAAD. The segment covering 12 to 22 has biased composition (gly residues); the sequence is SRGGGGGGGGA. Residues 197–217 form the ELK domain; sequence ELKEMLLKKYSGCLSRLRSEF. The segment at residues 218–281 is a DNA-binding region (homeobox; TALE-type); the sequence is LKKRKKGKLP…NQRKRHWKPS (64 aa).

It belongs to the TALE/KNOX homeobox family.

Its subcellular location is the nucleus. In terms of biological role, probable transcription factor that may be involved in shoot formation during embryogenesis. The polypeptide is Homeobox protein knotted-1-like 10 (OSH71) (Oryza sativa subsp. indica (Rice)).